The primary structure comprises 1620 residues: NAD-specific glutamate dehydrogenase (1620 aa).

Lys-851 is an active-site residue.

The protein belongs to the Glu/Leu/Phe/Val dehydrogenases family. In terms of assembly, homotetramer. In terms of processing, contains disulfide bonds (interchain).

The enzyme catalyses L-glutamate + NAD(+) + H2O = 2-oxoglutarate + NH4(+) + NADH + H(+). With respect to regulation, activity subject to allosteric control by arginine and citrate, which function as positive and negative effectors, respectively. In terms of biological role, involved in arginine catabolism by converting L-glutamate, into 2-oxoglutarate, which is then channeled into the tricarboxylic acid cycle. Can also utilize other amino acids of the glutamate family. The protein is NAD-specific glutamate dehydrogenase (gdhB) of Pseudomonas aeruginosa (strain ATCC 15692 / DSM 22644 / CIP 104116 / JCM 14847 / LMG 12228 / 1C / PRS 101 / PAO1).